A 216-amino-acid polypeptide reads, in one-letter code: Cytochrome c biogenesis ATP-binding export protein CcmA (216 aa).

Residues 2 to 215 (LSVEELSCVR…SNHLRKIKLG (214 aa)) form the ABC transporter domain. 34 to 41 (GHNGAGKT) is an ATP binding site.

It belongs to the ABC transporter superfamily. CcmA exporter (TC 3.A.1.107) family. In terms of assembly, the complex is composed of two ATP-binding proteins (CcmA) and two transmembrane proteins (CcmB).

It is found in the cell inner membrane. The catalysed reaction is heme b(in) + ATP + H2O = heme b(out) + ADP + phosphate + H(+). Its function is as follows. Part of the ABC transporter complex CcmAB involved in the biogenesis of c-type cytochromes; once thought to export heme, this seems not to be the case, but its exact role is uncertain. Responsible for energy coupling to the transport system. This Photobacterium profundum (strain SS9) protein is Cytochrome c biogenesis ATP-binding export protein CcmA.